The sequence spans 286 residues: Lipoyl synthase (286 aa).

[4Fe-4S] cluster-binding residues include Cys38, Cys43, Cys49, Cys64, Cys68, Cys71, and Ser276. The Radical SAM core domain maps to 50-265 (WEQGVATFMI…ENIALDMGFL (216 aa)).

Belongs to the radical SAM superfamily. Lipoyl synthase family. The cofactor is [4Fe-4S] cluster.

It is found in the cytoplasm. The enzyme catalyses [[Fe-S] cluster scaffold protein carrying a second [4Fe-4S](2+) cluster] + N(6)-octanoyl-L-lysyl-[protein] + 2 oxidized [2Fe-2S]-[ferredoxin] + 2 S-adenosyl-L-methionine + 4 H(+) = [[Fe-S] cluster scaffold protein] + N(6)-[(R)-dihydrolipoyl]-L-lysyl-[protein] + 4 Fe(3+) + 2 hydrogen sulfide + 2 5'-deoxyadenosine + 2 L-methionine + 2 reduced [2Fe-2S]-[ferredoxin]. Its pathway is protein modification; protein lipoylation via endogenous pathway; protein N(6)-(lipoyl)lysine from octanoyl-[acyl-carrier-protein]: step 2/2. In terms of biological role, catalyzes the radical-mediated insertion of two sulfur atoms into the C-6 and C-8 positions of the octanoyl moiety bound to the lipoyl domains of lipoate-dependent enzymes, thereby converting the octanoylated domains into lipoylated derivatives. The polypeptide is Lipoyl synthase (Karelsulcia muelleri (strain GWSS) (Sulcia muelleri)).